The following is a 505-amino-acid chain: 2-isopropylmalate synthase (505 aa).

The 263-residue stretch at Val-5 to Tyr-267 folds into the Pyruvate carboxyltransferase domain. 4 residues coordinate Mn(2+): Asp-14, His-202, His-204, and Asn-238. The regulatory domain stretch occupies residues Thr-391–Lys-505.

It belongs to the alpha-IPM synthase/homocitrate synthase family. LeuA type 1 subfamily. Homodimer. Mn(2+) serves as cofactor.

Its subcellular location is the cytoplasm. The catalysed reaction is 3-methyl-2-oxobutanoate + acetyl-CoA + H2O = (2S)-2-isopropylmalate + CoA + H(+). The protein operates within amino-acid biosynthesis; L-leucine biosynthesis; L-leucine from 3-methyl-2-oxobutanoate: step 1/4. Its function is as follows. Catalyzes the condensation of the acetyl group of acetyl-CoA with 3-methyl-2-oxobutanoate (2-ketoisovalerate) to form 3-carboxy-3-hydroxy-4-methylpentanoate (2-isopropylmalate). This Pelotomaculum thermopropionicum (strain DSM 13744 / JCM 10971 / SI) protein is 2-isopropylmalate synthase.